Consider the following 427-residue polypeptide: UDP-N-acetylglucosamine 1-carboxyvinyltransferase (427 aa).

A phosphoenolpyruvate-binding site is contributed by 22–23; the sequence is KN. Arginine 92 contacts UDP-N-acetyl-alpha-D-glucosamine. The active-site Proton donor is aspartate 116. UDP-N-acetyl-alpha-D-glucosamine-binding residues include aspartate 312 and methionine 334.

Belongs to the EPSP synthase family. MurA subfamily.

The protein localises to the cytoplasm. It catalyses the reaction phosphoenolpyruvate + UDP-N-acetyl-alpha-D-glucosamine = UDP-N-acetyl-3-O-(1-carboxyvinyl)-alpha-D-glucosamine + phosphate. It participates in cell wall biogenesis; peptidoglycan biosynthesis. In terms of biological role, cell wall formation. Adds enolpyruvyl to UDP-N-acetylglucosamine. In Borreliella burgdorferi (strain ATCC 35210 / DSM 4680 / CIP 102532 / B31) (Borrelia burgdorferi), this protein is UDP-N-acetylglucosamine 1-carboxyvinyltransferase.